The sequence spans 75 residues: UPF0352 protein YejL (75 aa).

This sequence belongs to the UPF0352 family.

The chain is UPF0352 protein YejL from Salmonella agona (strain SL483).